Reading from the N-terminus, the 521-residue chain is MMDLFKTDIMPDLQSSMMASIGSNWRFALFVAATLLTSYIVIVRPLKNVLFHPLRKYPGPKLFAGSSIPYGFWYMTGKWHTKIRQLHATYGPVVRIGPDELSYACPEAWEDIYGRYVPAKRKENPKPVWYCSPDAHDMVGASLGDHGRMRRVMTPGFTYSAMCKQEPLIKVHVDLFLEKLRGVCDDGNATVNMLEWFTYCTFDLIGDLSFGEPFGCLENSMLHPWLQLVFANIYVTHIILLCKRIPFFYLFLPIKTTLQLYRDFNRHVILLRQVVERRLSLTTPRNDFLDIMTSKKTSTLYLTNEEIFKNAILLTGGGAETTSSSLTGMAFILTTRPDVKKRIVEELHATFPNEEAINMRSVAQLTYTGAFIEEAMRYYPPGPNTMWRTTPAGGNTILGDYIPENTIIGIPHRVLYRSEAYWKHADEIHPERWLPDGQRPAEFDHDRREGFQPFSYGPRACIAMNLAYAEMRYILARFLWNFDIQETEQSKHWMDNQKAYLVWDKPGLFVRLKPVAKEEAQ.

The helical transmembrane segment at 23–43 (SNWRFALFVAATLLTSYIVIV) threads the bilayer. A glycan (N-linked (GlcNAc...) asparagine) is linked at asparagine 188. Cysteine 461 provides a ligand contact to heme.

This sequence belongs to the cytochrome P450 family. Heme is required as a cofactor.

It localises to the membrane. The catalysed reaction is dehydroprobetaenone I + NADPH + O2 + H(+) = epoxybetaenone + NADP(+) + H2O. The enzyme catalyses dehydroprobetaenone I + 3 NADPH + 3 O2 + 3 H(+) = betaenone C + 3 NADP(+) + 3 H2O. The protein operates within mycotoxin biosynthesis. Functionally, cytochrome P450 monooxygenase; part of the gene cluster that mediates the biosynthesis of betaenones, phytotoxic polyketides involved in leaf spot disease in sugar beets. The first step of the pathway is the synthesis of dehydroprobetaenone I by the polyketide synthase bet1 and the enoyl reductase bet3 via condensation of one acetyl-CoA starter unit with 7 malonyl-CoA units and 5 methylations. The C-terminal reductase (R) domain of bet1 catalyzes the reductive release of the polyketide chain. Because bet1 lacks a designated enoylreductase (ER) domain, the required activity is provided the enoyl reductase bet3. The short-chain dehydrogenase/reductase bet4 then catalyzes reduction of dehydroprobetaenone I to probetaenone I. The cytochrome P450 monooxygenase bet2 catalyzes successive epoxidation, oxidation (resulting from epoxide opening) and hydroxylation to install a tertiary alcohol in the decaline ring to yield betaenone C from dehydroprobetaenone I and betaenone B from probetaenone I. The FAD-linked oxidoreductase (orf1) is probably responsible for the conversion of betaenone C to betaenone A via an intramolecular aldol reaction between C-1 and C-17 to form the bridged tricyclic system in betaenone A. The polypeptide is Cytochrome P450 monooxygenase bet2 (Neocamarosporium betae (Beet black rot fungus)).